A 140-amino-acid chain; its full sequence is UPF0654 protein C22G7.11c (140 aa).

2 disordered regions span residues 1–88 and 110–140; these read MPDP…DPMK and YKAT…ETQA. Positions 24–33 are enriched in basic and acidic residues; sequence AKERAEDYIE. The span at 34–44 shows a compositional bias: polar residues; sequence SHSSGQETGDY. The segment covering 54 to 71 has biased composition (acidic residues); that stretch reads DYEDLGDYDEDADFDNEE.

The protein belongs to the UPF0654 (con-6) family.

The polypeptide is UPF0654 protein C22G7.11c (Schizosaccharomyces pombe (strain 972 / ATCC 24843) (Fission yeast)).